Here is a 226-residue protein sequence, read N- to C-terminus: 3-dehydroquinate dehydratase (226 aa).

3-dehydroquinate is bound by residues Glu-33–Arg-35 and Arg-65. The Proton donor/acceptor role is filled by His-121. Lys-146 (schiff-base intermediate with substrate) is an active-site residue. Residues Arg-188, Ser-207, and Gln-211 each contribute to the 3-dehydroquinate site.

Belongs to the type-I 3-dehydroquinase family. As to quaternary structure, homodimer.

The enzyme catalyses 3-dehydroquinate = 3-dehydroshikimate + H2O. The protein operates within metabolic intermediate biosynthesis; chorismate biosynthesis; chorismate from D-erythrose 4-phosphate and phosphoenolpyruvate: step 3/7. In terms of biological role, involved in the third step of the chorismate pathway, which leads to the biosynthesis of aromatic amino acids. Catalyzes the cis-dehydration of 3-dehydroquinate (DHQ) and introduces the first double bond of the aromatic ring to yield 3-dehydroshikimate. The sequence is that of 3-dehydroquinate dehydratase from Lactococcus lactis subsp. lactis (strain IL1403) (Streptococcus lactis).